Here is a 258-residue protein sequence, read N- to C-terminus: Putative phosphoenolpyruvate synthase regulatory protein (258 aa).

146–153 (GVSRVGKT) is an ADP binding site.

It belongs to the pyruvate, phosphate/water dikinase regulatory protein family. PSRP subfamily.

The catalysed reaction is [pyruvate, water dikinase] + ADP = [pyruvate, water dikinase]-phosphate + AMP + H(+). The enzyme catalyses [pyruvate, water dikinase]-phosphate + phosphate + H(+) = [pyruvate, water dikinase] + diphosphate. Its function is as follows. Bifunctional serine/threonine kinase and phosphorylase involved in the regulation of the phosphoenolpyruvate synthase (PEPS) by catalyzing its phosphorylation/dephosphorylation. In Thiobacillus denitrificans (strain ATCC 25259 / T1), this protein is Putative phosphoenolpyruvate synthase regulatory protein.